A 360-amino-acid polypeptide reads, in one-letter code: DNA replication and repair protein RecF (360 aa).

ATP is bound at residue G30 to T37.

This sequence belongs to the RecF family.

The protein resides in the cytoplasm. Functionally, the RecF protein is involved in DNA metabolism; it is required for DNA replication and normal SOS inducibility. RecF binds preferentially to single-stranded, linear DNA. It also seems to bind ATP. The sequence is that of DNA replication and repair protein RecF from Actinobacillus pleuropneumoniae serotype 5b (strain L20).